We begin with the raw amino-acid sequence, 2291 residues long: Protein Ycf2 (2291 aa).

An ATP-binding site is contributed by 1645 to 1652 (GSIGTGRS).

The protein belongs to the Ycf2 family.

The protein localises to the plastid. It is found in the chloroplast stroma. Its function is as follows. Probable ATPase of unknown function. Its presence in a non-photosynthetic plant (Epifagus virginiana) and experiments in tobacco indicate that it has an essential function which is probably not related to photosynthesis. The chain is Protein Ycf2 from Olimarabidopsis pumila (Dwarf rocket).